The chain runs to 421 residues: Signal recognition particle receptor FtsY (421 aa).

Positions 1-10 are enriched in basic residues; that stretch reads MFSFFRRKKK. The interval 1–31 is disordered; sequence MFSFFRRKKKQETPALEEAQIQETAAKAESE. GTP-binding positions include 228-235, 309-313, and 373-376; these read GINGAGKT, DTAGR, and TKLD.

The protein belongs to the GTP-binding SRP family. FtsY subfamily. As to quaternary structure, part of the signal recognition particle protein translocation system, which is composed of SRP and FtsY. SRP is a ribonucleoprotein composed of Ffh and a 4.5S RNA molecule.

The protein localises to the cell inner membrane. Its subcellular location is the cytoplasm. The enzyme catalyses GTP + H2O = GDP + phosphate + H(+). Involved in targeting and insertion of nascent membrane proteins into the cytoplasmic membrane. Acts as a receptor for the complex formed by the signal recognition particle (SRP) and the ribosome-nascent chain (RNC). Interaction with SRP-RNC leads to the transfer of the RNC complex to the Sec translocase for insertion into the membrane, the hydrolysis of GTP by both Ffh and FtsY, and the dissociation of the SRP-FtsY complex into the individual components. In Neisseria meningitidis serogroup A / serotype 4A (strain DSM 15465 / Z2491), this protein is Signal recognition particle receptor FtsY.